Here is a 1420-residue protein sequence, read N- to C-terminus: DNA-directed RNA polymerase subunit beta' (1420 aa).

Zn(2+)-binding residues include Cys-71, Cys-73, Cys-86, and Cys-89. The Mg(2+) site is built by Asp-461, Asp-463, and Asp-465. Zn(2+) contacts are provided by Cys-815, Cys-889, Cys-896, and Cys-899.

The protein belongs to the RNA polymerase beta' chain family. In terms of assembly, the RNAP catalytic core consists of 2 alpha, 1 beta, 1 beta' and 1 omega subunit. When a sigma factor is associated with the core the holoenzyme is formed, which can initiate transcription. Mg(2+) is required as a cofactor. The cofactor is Zn(2+).

The catalysed reaction is RNA(n) + a ribonucleoside 5'-triphosphate = RNA(n+1) + diphosphate. Its function is as follows. DNA-dependent RNA polymerase catalyzes the transcription of DNA into RNA using the four ribonucleoside triphosphates as substrates. This is DNA-directed RNA polymerase subunit beta' from Histophilus somni (strain 2336) (Haemophilus somnus).